The sequence spans 134 residues: MAKAPASNAAQRVRKKVRKNVADGIAHVHASFNNTIITITDRQGNALSWASSGGQGFKGSRKSTPFAAQVASEVAGRAAIEQGVKNLDVEIKGPGPGRESSVRALAALGIRINMIADVTPVPHNGCRPQKRRRI.

The protein belongs to the universal ribosomal protein uS11 family. In terms of assembly, part of the 30S ribosomal subunit. Interacts with proteins S7 and S18. Binds to IF-3.

Located on the platform of the 30S subunit, it bridges several disparate RNA helices of the 16S rRNA. Forms part of the Shine-Dalgarno cleft in the 70S ribosome. The polypeptide is Small ribosomal subunit protein uS11 (Albidiferax ferrireducens (strain ATCC BAA-621 / DSM 15236 / T118) (Rhodoferax ferrireducens)).